Reading from the N-terminus, the 394-residue chain is Elongation factor Tu (394 aa).

Positions Lys10–Glu204 constitute a tr-type G domain. The segment at Gly19 to Thr26 is G1. Gly19 to Thr26 is a GTP binding site. Residue Thr26 coordinates Mg(2+). Residues Gly60–Asn64 are G2. Residues Asp81–Gly84 form a G3 region. Residues Asp81–His85 and Asn136–Asp139 contribute to the GTP site. Positions Asn136–Asp139 are G4. The tract at residues Ser174–Leu176 is G5.

The protein belongs to the TRAFAC class translation factor GTPase superfamily. Classic translation factor GTPase family. EF-Tu/EF-1A subfamily. As to quaternary structure, monomer.

Its subcellular location is the cytoplasm. It carries out the reaction GTP + H2O = GDP + phosphate + H(+). Functionally, GTP hydrolase that promotes the GTP-dependent binding of aminoacyl-tRNA to the A-site of ribosomes during protein biosynthesis. In Mycoplasma pneumoniae (strain ATCC 29342 / M129 / Subtype 1) (Mycoplasmoides pneumoniae), this protein is Elongation factor Tu.